Here is a 785-residue protein sequence, read N- to C-terminus: Probable splicing factor 3A subunit 1 (785 aa).

Position 1 is an N-acetylmethionine (Met-1). The tract at residues Met-1–Asn-42 is disordered. Residues Ile-71–Tyr-113 form an SURP motif 1 repeat. The interval Asn-124 to Pro-175 is disordered. An SURP motif 2 repeat occupies Ile-193–Phe-235. Disordered stretches follow at residues Asn-522–Ile-554 and Arg-639–Asn-713. Composition is skewed to pro residues over residues Ala-543–Ile-554 and Gln-653–Pro-674. The segment covering Pro-677–Glu-686 has biased composition (basic and acidic residues). One can recognise a Ubiquitin-like domain in the interval Val-707–Gly-782.

Component of splicing factor SF3A which is composed of three subunits.

Its subcellular location is the nucleus. In Arabidopsis thaliana (Mouse-ear cress), this protein is Probable splicing factor 3A subunit 1.